A 500-amino-acid chain; its full sequence is MLDNRKFSEQELVRRNKYKTLVEQNKDPYKVTNWKRNTTLLKLNEKYKDYSKEDLLNLNQELVVVAGRIKLYREAGKKAAFVNIDDQDSSIQLYVRLDEIGDQSFEDFRNFDLGDIIGVKGIMMRTDHGELSIRCKEVVLLSKALRPLPDKHAGIQDIEEKYRRRYVDLIVNHDVRKTFQARTKIIRTLQNFLDNKGYMEVETPILHSLKGGASAKPFITHYNVLNTDVYLRIATELHLKRLIVGGFEGVYEIGRIFRNEGMSTRHNPEFTSIELYVAYEDMFFLMNLTEEIFRVCNAAVNSNSIIEYNNVKIDLSKPFKRLHMVDGIKQVTGVDFWKEMTVQQALELAKKHKVHVEKHQESVGHIINLFYEEFVESTIVEPTFVYGHPKEISPLAKSNPSDPRFTDRFELFILGREYANAFSELNDPIDQYERFKAQIEEESKGNDEANDMDIDFIEALEHAMPPTAGIGIGIDRLVMLLTNSESIKDVLLFPQMKPRE.

Residues Glu410 and Glu417 each contribute to the Mg(2+) site.

This sequence belongs to the class-II aminoacyl-tRNA synthetase family. As to quaternary structure, homodimer. Mg(2+) is required as a cofactor.

It is found in the cytoplasm. It carries out the reaction tRNA(Lys) + L-lysine + ATP = L-lysyl-tRNA(Lys) + AMP + diphosphate. This is Lysine--tRNA ligase from Mycoplasma mycoides subsp. mycoides SC (strain CCUG 32753 / NCTC 10114 / PG1).